Reading from the N-terminus, the 292-residue chain is Non-homologous end joining protein Ku (292 aa).

The Ku domain occupies 12-196 (KLSLVTCPVV…KITKDMVELA (185 aa)). The tract at residues 231-292 (KPIKLPEPEE…RSAARQRKAG (62 aa)) is disordered. The segment covering 271–292 (APAHRRPAKKAHRSAARQRKAG) has biased composition (basic residues).

It belongs to the prokaryotic Ku family. In terms of assembly, homodimer. Interacts with LigD.

Functionally, with LigD forms a non-homologous end joining (NHEJ) DNA repair enzyme, which repairs dsDNA breaks with reduced fidelity. Binds linear dsDNA with 5'- and 3'- overhangs but not closed circular dsDNA nor ssDNA. Recruits and stimulates the ligase activity of LigD. In Bradyrhizobium sp. (strain ORS 278), this protein is Non-homologous end joining protein Ku.